The sequence spans 2332 residues: Genome polyprotein (2332 aa).

A Peptidase C28 domain is found at 1-201 (MHTTDCFIAL…WKAMVQRKLK (201 aa)). At 1 to 1480 (MHTTDCFIAL…SFVKRAFKRL (1480 aa)) the chain is on the cytoplasmic side. Residues Cys51, His148, and Asp163 each act as for leader protease activity in the active site. Disordered stretches follow at residues 199–218 (KLKG…QSGN) and 238–265 (QLGD…NTQN). The N-myristoyl glycine; by host moiety is linked to residue Gly202. 2 stretches are compositionally biased toward polar residues: residues 204 to 218 (GQSS…QSGN) and 238 to 251 (QLGD…SNEG). The span at 252-265 (STDTTSTHTTNTQN) shows a compositional bias: low complexity. An antigenic epitope region spans residues 789 to 797 (ALLRAATYY). The Cell attachment site motif lies at 868–870 (RGD). Positions 1189-1353 (NVHIANLCKV…DGYKINNKLD (165 aa)) constitute an SF3 helicase domain. 1217–1224 (GKSGQGKS) contributes to the ATP binding site. An intramembrane segment occupies 1481–1501 (KENFEIVALCLTLLANIVIMI). Residues 1502-2332 (RETRKRQKMV…RWVNAVCGDA (831 aa)) are Cytoplasmic-facing. Composition is skewed to basic and acidic residues over residues 1529–1538 (KTLDEAEKNP) and 1549–1563 (FRER…RDDV). The disordered stretch occupies residues 1529 to 1584 (KTLDEAEKNPLETSGASTVGFRERTLPGQKARDDVNSEPAQPAEEQPQAEGPYAGP). The segment covering 1566-1578 (EPAQPAEEQPQAE) has biased composition (low complexity). O-(5'-phospho-RNA)-tyrosine occurs at positions 1581, 1604, and 1628. One can recognise a Peptidase C3 domain in the interval 1652–1848 (APPTDLQKMV…YCSCVSRSML (197 aa)). His1695 serves as the catalytic For protease 3C activity; Proton donor/acceptor. Residues Asp1733 and Cys1812 each act as for protease 3C activity in the active site. Positions 1878-1886 (MRKTKLAPT) match the Nuclear localization signal motif. The 119-residue stretch at 2096 to 2214 (RNVWDVDYSA…ASDYDLDFEA (119 aa)) folds into the RdRp catalytic domain. The For RdRp activity role is filled by Asp2200.

The protein belongs to the picornaviruses polyprotein family. In terms of assembly, interacts with host ISG15. Capsid protein VP1: Interacts (via R-G-D motif) with host ITGAV/ITGB6. As to quaternary structure, interacts (via R-G-D motif) with host ITGAV/ITGB6. Interacts with host MAVS; this interaction inhibits binding of host TRAF3 to MAVS, thereby suppressing interferon-mediated responses. Forms homooligomers. In terms of assembly, homohexamer. Interacts with host VIM. Interacts with host BECN1. As to quaternary structure, interacts with host DCTN3. Interacts with RNA-dependent RNA polymerase; this interaction allows 3B-1 to binds 2 polymerases and act as a primer. It also allows the recruitment of the RNA-dependent RNA polymerase to host membranes. In terms of assembly, interacts with RNA-dependent RNA polymerase; this interaction allows 3B-2 to act as a primer. As to quaternary structure, interacts with RNA-dependent RNA polymerase; this interaction allows 3B-3 to act as a primer. Interacts with 3B-1; this interaction allows 3B-1 to binds 2 polymerases and act as a primer. It also allows the recruitment of the RNA-dependent RNA polymerase to host membranes. Interacts with 3B-2; this interaction allows 3B-2 to act as a primer. Interacts with 3B-3; this interaction allows 3B-3 to act as a primer. In terms of processing, removes six residues from its own C-terminus, generating sLb(pro). Post-translationally, specific enzymatic cleavages in vivo by the viral proteases yield a variety of precursors and mature proteins. The polyprotein seems to be cotranslationally cleaved at the 2A/2B junction by a ribosomal skip from one codon to the next without formation of a peptide bond. This process would release the L-P1-2A peptide from the translational complex. During virion maturation, immature virions are rendered infectious following cleavage of VP0 into VP4 and VP2. This maturation seems to be an autocatalytic event triggered by the presence of RNA in the capsid and is followed by a conformational change of the particle. In terms of processing, myristoylation is required during RNA encapsidation and formation of the mature virus particle. Post-translationally, uridylylated by the polymerase and covalently linked to the 5'-end of genomic RNA. These uridylylated forms act as a nucleotide-peptide primer for the polymerase.

Its subcellular location is the host nucleus. The protein resides in the host cytoplasm. It localises to the virion. The protein localises to the host endoplasmic reticulum membrane. It is found in the host cytoplasmic vesicle membrane. It catalyses the reaction Autocatalytically cleaves itself from the polyprotein of the foot-and-mouth disease virus by hydrolysis of a Lys-|-Gly bond, but then cleaves host cell initiation factor eIF-4G at bonds -Gly-|-Arg- and -Lys-|-Arg-.. It carries out the reaction a ribonucleoside 5'-triphosphate + H2O = a ribonucleoside 5'-diphosphate + phosphate + H(+). The enzyme catalyses RNA(n) + a ribonucleoside 5'-triphosphate = RNA(n+1) + diphosphate. The catalysed reaction is Selective cleavage of Gln-|-Gly bond in the poliovirus polyprotein. In other picornavirus reactions Glu may be substituted for Gln, and Ser or Thr for Gly.. Functionally, autocatalytically cleaves itself from the polyprotein at the L/VP0 junction. Also cleaves the host translation initiation factors EIF4G1 and EIF4G3, in order to shut off the capped cellular mRNA transcription. Plays a role in counteracting host innate antiviral response using diverse mechanisms. Possesses a deubiquitinase activity acting on both 'Lys-48' and 'Lys-63'-linked polyubiquitin chains. In turn, inhibits the ubiquitination and subsequent activation of key signaling molecules of type I IFN response such as host RIGI, TBK1, TRAF3 and TRAF6. Inhibits host NF-kappa-B activity by inducing a decrease in RELA mRNA levels. Cleaves a peptide bond in the C-terminus of host ISG15, resulting in the damaging of this modifier that can no longer be attached to target proteins. Also cleaves host G3BP1 and G3BP2 in order to inhibit cytoplasmic stress granules assembly. Its function is as follows. Lies on the inner surface of the capsid shell. After binding to the host receptor, the capsid undergoes conformational changes. Capsid protein VP4 is released, capsid protein VP1 N-terminus is externalized, and together, they shape a pore in the host membrane through which the viral genome is translocated into the host cell cytoplasm. After genome has been released, the channel shrinks. In terms of biological role, forms an icosahedral capsid of pseudo T=3 symmetry with capsid proteins VP1 and VP3. The capsid is composed of 60 copies of each capsid protein organized in the form of twelve pentamers and encloses the viral positive strand RNA genome. Upon acidifcation in the endosome, dissociates into pentamers. Forms an icosahedral capsid of pseudo T=3 symmetry with capsid proteins VP0 and VP3. The capsid is composed of 60 copies of each capsid protein organized in the form of twelve pentamers and encloses the viral positive strand RNA genome. Upon acidifcation in the endosome, dissociates into pentamers. Functionally, forms an icosahedral capsid of pseudo T=3 symmetry with capsid proteins VP2 and VP3. The capsid is composed of 60 copies of each capsid protein organized in the form of twelve pentamers and encloses the viral positive strand RNA genome. Mediates cell entry by attachment to an integrin receptor, usually host ITGAV/ITGB6. In addition, targets host MAVS to suppress type I IFN pathway. Upon acidifcation in the endosome, dissociates into pentamers. Its function is as follows. Mediates self-processing of the polyprotein by a translational effect termed 'ribosome skipping'. Mechanistically, 2A-mediated cleavage occurs between the C-terminal glycine and the proline of the downstream protein 2B. In the case of foot-and-mouth disease virus, the 2A oligopeptide is post-translationally 'trimmed' from the C-terminus of the upstream protein 1D by 3C proteinase. In terms of biological role, plays an essential role in the virus replication cycle by acting as a viroporin. Creates a pore in the host endoplasmic reticulum and as a consequence releases Ca2+ in the cytoplasm of infected cell. In turn, high levels of cytoplasmic calcium may trigger membrane trafficking and transport of viral ER-associated proteins to viroplasms, sites of viral genome replication. Associates with and induces structural rearrangements of intracellular membranes. Triggers host autophagy by interacting with host BECN1 and thereby promotes viral replication. Participates in viral replication and interacts with host DHX9. Displays RNA-binding, nucleotide binding and NTPase activities. May play a role in virion morphogenesis and viral RNA encapsidation by interacting with the capsid protein VP3. Functionally, plays important roles in virus replication, virulence and host range. Cooperates with host DDX56 to inhibit IRF3 nuclear translocation and subsequent type I interferon production. Its function is as follows. Covalently linked to the 5'-end of both the positive-strand and negative-strand genomic RNAs. Acts as a genome-linked replication primer. In terms of biological role, cysteine protease that generates mature viral proteins from the precursor polyprotein. In addition to its proteolytic activity, binds to viral RNA and thus influences viral genome replication. RNA and substrate bind cooperatively to the protease. RNA-directed RNA polymerase 3D-POL replicates genomic and antigenomic RNA by recognizing replications specific signals. Covalently attaches UMP to a tyrosine of VPg, which is used to prime RNA synthesis. The positive stranded RNA genome is first replicated at virus induced membranous vesicles, creating a dsRNA genomic replication form. This dsRNA is then used as template to synthesize positive stranded RNA genomes. ss(+)RNA genomes are either translated, replicated or encapsidated. This is Genome polyprotein from Foot-and-mouth disease virus (isolate -/Germany/A5Westerwald/1951 serotype A) (FMDV).